Consider the following 500-residue polypeptide: Potassium voltage-gated channel subfamily V member 1 (500 aa).

Residues 1–210 (MPSSGRALLD…EKPGSSTAAR (210 aa)) are Cytoplasmic-facing. Positions 168 to 181 (KKDTEDQESQHESE) are enriched in basic and acidic residues. Residues 168-189 (KKDTEDQESQHESEQDFSQGPC) form a disordered region. The chain crosses the membrane as a helical span at residues 211–231 (IFGVISIIFVVVSIINMALMS). Over 232 to 238 (AELSWLD) the chain is Extracellular. A helical membrane pass occupies residues 239 to 259 (LQLLEILEYVCISWFTGEFVL). Residues 260 to 276 (RFLCVRDRCRFLRKVPN) are Cytoplasmic-facing. The helical transmembrane segment at 277–297 (IIDLLAILPFYITLLVESLSG) threads the bilayer. The Extracellular portion of the chain corresponds to 298–309 (SQTTQELENVGR). The helical; Voltage-sensor transmembrane segment at 310-331 (IVQVLRLLRALRMLKLGRHSTG) threads the bilayer. Topologically, residues 332–345 (LRSLGMTITQCYEE) are cytoplasmic. The chain crosses the membrane as a helical span at residues 346 to 366 (VGLLLLFLSVGISIFSTVEYF). Positions 392 to 397 (TVGYGD) match the Selectivity filter motif. Residues 407–427 (IVAFMCILSGILVLALPIAII) traverse the membrane as a helical segment. Residues 428-500 (NDRFSACYFT…RSSGGDDFWF (73 aa)) lie on the Cytoplasmic side of the membrane.

The protein belongs to the potassium channel family. V (TC 1.A.1.2) subfamily. Kv8.1/KCNV1 sub-subfamily. Heteromultimer with KCNB1 and KCNB2. Interacts with KCNC4 and KCND1. Detected in brain.

The protein localises to the cell membrane. Its function is as follows. Potassium channel subunit that does not form functional channels by itself. Modulates KCNB1 and KCNB2 channel activity by shifting the threshold for inactivation to more negative values and by slowing the rate of inactivation. Can down-regulate the channel activity of KCNB1, KCNB2, KCNC4 and KCND1, possibly by trapping them in intracellular membranes. In Homo sapiens (Human), this protein is Potassium voltage-gated channel subfamily V member 1 (KCNV1).